Here is a 588-residue protein sequence, read N- to C-terminus: BTB/POZ domain-containing protein At3g26490 (588 aa).

The 72-residue stretch at 28-99 (NDLVIQVKST…CYGITITLCA (72 aa)) folds into the BTB domain. The NPH3 domain maps to 218 to 507 (RWWGEDLAEL…VQILFVEQAR (290 aa)). Phosphoserine occurs at positions 376 and 378. A Phosphotyrosine modification is found at Y448. The tract at residues 529–554 (FTTRREEGGQEEEERDETKPSGGFLQ) is disordered.

Belongs to the NPH3 family.

It functions in the pathway protein modification; protein ubiquitination. Functionally, may act as a substrate-specific adapter of an E3 ubiquitin-protein ligase complex (CUL3-RBX1-BTB) which mediates the ubiquitination and subsequent proteasomal degradation of target proteins. In Arabidopsis thaliana (Mouse-ear cress), this protein is BTB/POZ domain-containing protein At3g26490.